The following is a 293-amino-acid chain: Phosphate-binding protein PstS 2 (293 aa).

Positions 1 to 23 (MKKHKMLSLLAVSGLMGIGILAG) are cleaved as a signal peptide. Cysteine 24 is lipidated: N-palmitoyl cysteine. Cysteine 24 carries S-diacylglycerol cysteine lipidation.

It belongs to the PstS family. The complex is composed of two ATP-binding proteins (PstB), two transmembrane proteins (PstC and PstA) and a solute-binding protein (PstS).

Its subcellular location is the cell membrane. Its function is as follows. Part of the ABC transporter complex PstSACB involved in phosphate import. In Streptococcus agalactiae serotype III (strain NEM316), this protein is Phosphate-binding protein PstS 2 (pstS2).